Consider the following 340-residue polypeptide: Protein B17 (340 aa).

Belongs to the orthopoxvirus B17 protein family.

The chain is Protein B17 from Vaccinia virus (strain Western Reserve) (VACV).